A 127-amino-acid chain; its full sequence is Putative platinum sensitivity protein 1 (127 aa).

The sequence is that of Putative platinum sensitivity protein 1 (PSY1) from Saccharomyces cerevisiae (strain ATCC 204508 / S288c) (Baker's yeast).